The sequence spans 740 residues: Phosphoribosylformylglycinamidine synthase subunit PurL (740 aa).

H49 is an active-site residue. Positions 52 and 91 each coordinate ATP. Position 93 (E93) interacts with Mg(2+). Residues 94-97 (SHNH) and R116 each bind substrate. The active-site Proton acceptor is H95. Position 117 (D117) interacts with Mg(2+). Substrate is bound at residue Q245. D273 is a Mg(2+) binding site. 317–319 (ESQ) contributes to the substrate binding site. ATP contacts are provided by D501 and G538. N539 serves as a coordination point for Mg(2+). S541 contacts substrate.

The protein belongs to the FGAMS family. In terms of assembly, monomer. Part of the FGAM synthase complex composed of 1 PurL, 1 PurQ and 2 PurS subunits.

It localises to the cytoplasm. The catalysed reaction is N(2)-formyl-N(1)-(5-phospho-beta-D-ribosyl)glycinamide + L-glutamine + ATP + H2O = 2-formamido-N(1)-(5-O-phospho-beta-D-ribosyl)acetamidine + L-glutamate + ADP + phosphate + H(+). It participates in purine metabolism; IMP biosynthesis via de novo pathway; 5-amino-1-(5-phospho-D-ribosyl)imidazole from N(2)-formyl-N(1)-(5-phospho-D-ribosyl)glycinamide: step 1/2. Part of the phosphoribosylformylglycinamidine synthase complex involved in the purines biosynthetic pathway. Catalyzes the ATP-dependent conversion of formylglycinamide ribonucleotide (FGAR) and glutamine to yield formylglycinamidine ribonucleotide (FGAM) and glutamate. The FGAM synthase complex is composed of three subunits. PurQ produces an ammonia molecule by converting glutamine to glutamate. PurL transfers the ammonia molecule to FGAR to form FGAM in an ATP-dependent manner. PurS interacts with PurQ and PurL and is thought to assist in the transfer of the ammonia molecule from PurQ to PurL. This chain is Phosphoribosylformylglycinamidine synthase subunit PurL, found in Sulfurovum sp. (strain NBC37-1).